A 141-amino-acid chain; its full sequence is HTH-type transcriptional repressor NsrR (141 aa).

The region spanning 2–129 (QLTSFTDYGL…DNYTLADMVQ (128 aa)) is the HTH rrf2-type domain. The H-T-H motif DNA-binding region spans 28 to 51 (ISQVTEVYGVSRNHMVKIINQLSR). [2Fe-2S] cluster contacts are provided by Cys-91, Cys-96, and Cys-102.

Requires [2Fe-2S] cluster as cofactor.

In terms of biological role, nitric oxide-sensitive repressor of genes involved in protecting the cell against nitrosative stress. May require iron for activity. This chain is HTH-type transcriptional repressor NsrR, found in Yersinia enterocolitica serotype O:8 / biotype 1B (strain NCTC 13174 / 8081).